Consider the following 176-residue polypeptide: Ribosome maturation factor RimP (176 aa).

This sequence belongs to the RimP family.

Its subcellular location is the cytoplasm. Functionally, required for maturation of 30S ribosomal subunits. The chain is Ribosome maturation factor RimP from Chlorobium limicola (strain DSM 245 / NBRC 103803 / 6330).